The sequence spans 261 residues: Putative [LysW]-aminoadipate/[LysW]-glutamate kinase (261 aa).

Substrate is bound by residues glycine 35–glycine 36, arginine 62, and asparagine 162.

This sequence belongs to the acetylglutamate kinase family. LysZ subfamily.

It is found in the cytoplasm. It catalyses the reaction [amino-group carrier protein]-C-terminal-N-(1,4-dicarboxybutan-1-yl)-L-glutamine + ATP = [amino-group carrier protein]-C-terminal-N-(1-carboxy-5-phosphooxy-5-oxopentan-1-yl)-L-glutamine + ADP. The catalysed reaction is [amino-group carrier protein]-C-terminal-gamma-(L-glutamyl)-L-glutamate + ATP = [amino-group carrier protein]-C-terminal-gamma-(5-phospho-L-glutamyl)-L-glutamate + ADP. The protein operates within amino-acid biosynthesis; L-lysine biosynthesis via AAA pathway; L-lysine from L-alpha-aminoadipate (Thermus route): step 2/5. Its pathway is amino-acid biosynthesis; L-arginine biosynthesis. In terms of biological role, involved in both the arginine and lysine biosynthetic pathways. Phosphorylates the LysW-bound precursors glutamate (for arginine biosynthesis), respectively alpha-aminoadipate (for lysine biosynthesis). In Pyrobaculum calidifontis (strain DSM 21063 / JCM 11548 / VA1), this protein is Putative [LysW]-aminoadipate/[LysW]-glutamate kinase.